The primary structure comprises 315 residues: D-erythronate dehydrogenase (315 aa).

NAD(+) contacts are provided by serine 119, tyrosine 143, and lysine 147. The active-site Proton acceptor is the tyrosine 143.

The protein belongs to the NAD(P)-dependent epimerase/dehydratase family.

The catalysed reaction is D-erythronate + NAD(+) = 2-dehydro-D-erythronate + NADH + H(+). Catalyzes oxidation of D-erythronate to 2-oxo-tetronate. Can use either NAD(+) or NADP(+) as cosubstrate, with a preference for NAD(+). This is D-erythronate dehydrogenase from Haemophilus influenzae (strain ATCC 51907 / DSM 11121 / KW20 / Rd).